The sequence spans 304 residues: ATP phosphoribosyltransferase (304 aa).

It belongs to the ATP phosphoribosyltransferase family. Long subfamily. It depends on Mg(2+) as a cofactor.

It is found in the cytoplasm. It catalyses the reaction 1-(5-phospho-beta-D-ribosyl)-ATP + diphosphate = 5-phospho-alpha-D-ribose 1-diphosphate + ATP. It participates in amino-acid biosynthesis; L-histidine biosynthesis; L-histidine from 5-phospho-alpha-D-ribose 1-diphosphate: step 1/9. Feedback inhibited by histidine. Functionally, catalyzes the condensation of ATP and 5-phosphoribose 1-diphosphate to form N'-(5'-phosphoribosyl)-ATP (PR-ATP). Has a crucial role in the pathway because the rate of histidine biosynthesis seems to be controlled primarily by regulation of HisG enzymatic activity. The sequence is that of ATP phosphoribosyltransferase from Xanthomonas euvesicatoria pv. vesicatoria (strain 85-10) (Xanthomonas campestris pv. vesicatoria).